A 700-amino-acid chain; its full sequence is Mei4-dependent protein 6 (700 aa).

Kelch repeat units follow at residues 276 to 322 (CIYL…MVID), 327 to 381 (KLYL…FDHG), 390 to 439 (IVYV…KIER), 452 to 499 (KLYI…FCQR), 508 to 558 (RIFT…SRFG), and 569 to 619 (IIYL…RFHE).

This is Mei4-dependent protein 6 (mde6) from Schizosaccharomyces pombe (strain 972 / ATCC 24843) (Fission yeast).